Consider the following 452-residue polypeptide: MAENQDYASGNGGIKALLLNFIHSQSFSGIFLFFCAVVAMISANSALSESYFHLWHTEIGFFIGETFIGMSLHHWINDVLMSFFFLMVGLEIKRELLFGELAGIKRAAFPAIAALGGMIVPAIVYTLFNFGTDSAHGFGIPMATDIAFALGVLLLLGDKVSLALKVFLVSLAVVDDLGAVVVIAIFYTEDLQTLWLLYSVVILGLLIGLNKMGVRSLFPYAILGVLLWITVHNCGIHATIAAVALAFTIPVKPKIESENFAQEAKELLERFLSHDKERANLLLASEQVHSVELLSKHSKSVQSPLVRLEHALHPWSAYFIMPVFAFANAGVAISSNIHFDIDGVLPGIMLGLIVGKPVGILGLTYLAEKMGIATRPEGVMWIDILGAGMLAGIGFTMSIFITNLAFTNPEATDVAKIAILSASLFAGALGYFFISIRCRFKKKKEACCTIKS.

11 helical membrane passes run Phe27 to Leu47, Phe67 to Met87, Ala108 to Phe128, Gly137 to Gly157, Val166 to Phe186, Leu194 to Val214, Ser216 to Ile236, Pro314 to Ser334, Gly343 to Leu363, Trp381 to Ile401, and Val414 to Ile434.

Belongs to the NhaA Na(+)/H(+) (TC 2.A.33) antiporter family.

Its subcellular location is the cell inner membrane. The catalysed reaction is Na(+)(in) + 2 H(+)(out) = Na(+)(out) + 2 H(+)(in). Its function is as follows. Na(+)/H(+) antiporter that extrudes sodium in exchange for external protons. This Wolinella succinogenes (strain ATCC 29543 / DSM 1740 / CCUG 13145 / JCM 31913 / LMG 7466 / NCTC 11488 / FDC 602W) (Vibrio succinogenes) protein is Na(+)/H(+) antiporter NhaA.